We begin with the raw amino-acid sequence, 110 residues long: Body wall hemoglobin (110 aa).

One can recognise a Globin domain in the interval 2-110 (VNWAAVVDAF…GAVDAIISHF (109 aa)). Histidine 70 provides a ligand contact to heme.

This sequence belongs to the globin family. As to quaternary structure, homotetramer.

In Cerebratulus lacteus (Milky ribbon worm), this protein is Body wall hemoglobin.